Reading from the N-terminus, the 258-residue chain is Acyl-[acyl-carrier-protein]--UDP-N-acetylglucosamine O-acyltransferase (258 aa).

This sequence belongs to the transferase hexapeptide repeat family. LpxA subfamily. In terms of assembly, homotrimer.

It localises to the cytoplasm. It carries out the reaction a (3R)-hydroxyacyl-[ACP] + UDP-N-acetyl-alpha-D-glucosamine = a UDP-3-O-[(3R)-3-hydroxyacyl]-N-acetyl-alpha-D-glucosamine + holo-[ACP]. It functions in the pathway glycolipid biosynthesis; lipid IV(A) biosynthesis; lipid IV(A) from (3R)-3-hydroxytetradecanoyl-[acyl-carrier-protein] and UDP-N-acetyl-alpha-D-glucosamine: step 1/6. In terms of biological role, involved in the biosynthesis of lipid A, a phosphorylated glycolipid that anchors the lipopolysaccharide to the outer membrane of the cell. The chain is Acyl-[acyl-carrier-protein]--UDP-N-acetylglucosamine O-acyltransferase from Myxococcus xanthus (strain DK1622).